Reading from the N-terminus, the 88-residue chain is U1-hexatoxin-Iw1d (88 aa).

Positions 1 to 17 are cleaved as a signal peptide; sequence LKFVVLICLVIMASTSA. Position 18 is a pyrrolidone carboxylic acid (glutamine 18). Disulfide bonds link cysteine 20/cysteine 31, cysteine 25/cysteine 39, cysteine 30/cysteine 65, cysteine 49/cysteine 73, and cysteine 67/cysteine 80. The propeptide occupies 86–88; the sequence is RSE.

Belongs to the MIT-like AcTx family. Expressed by the venom gland.

Its subcellular location is the secreted. This Illawarra wisharti (Illawarra funnel-web spider) protein is U1-hexatoxin-Iw1d.